The chain runs to 327 residues: Lipoyl synthase (327 aa).

Positions 66, 71, 77, 92, 96, 99, and 306 each coordinate [4Fe-4S] cluster. The Radical SAM core domain maps to 78-295; that stretch reads FSKGTATFMI…EKEAYELGFT (218 aa).

The protein belongs to the radical SAM superfamily. Lipoyl synthase family. [4Fe-4S] cluster is required as a cofactor.

Its subcellular location is the cytoplasm. It carries out the reaction [[Fe-S] cluster scaffold protein carrying a second [4Fe-4S](2+) cluster] + N(6)-octanoyl-L-lysyl-[protein] + 2 oxidized [2Fe-2S]-[ferredoxin] + 2 S-adenosyl-L-methionine + 4 H(+) = [[Fe-S] cluster scaffold protein] + N(6)-[(R)-dihydrolipoyl]-L-lysyl-[protein] + 4 Fe(3+) + 2 hydrogen sulfide + 2 5'-deoxyadenosine + 2 L-methionine + 2 reduced [2Fe-2S]-[ferredoxin]. It functions in the pathway protein modification; protein lipoylation via endogenous pathway; protein N(6)-(lipoyl)lysine from octanoyl-[acyl-carrier-protein]: step 2/2. In terms of biological role, catalyzes the radical-mediated insertion of two sulfur atoms into the C-6 and C-8 positions of the octanoyl moiety bound to the lipoyl domains of lipoate-dependent enzymes, thereby converting the octanoylated domains into lipoylated derivatives. The protein is Lipoyl synthase of Neisseria gonorrhoeae (strain ATCC 700825 / FA 1090).